A 269-amino-acid chain; its full sequence is Tryptophan synthase alpha chain (269 aa).

Active-site proton acceptor residues include Glu50 and Asp61.

This sequence belongs to the TrpA family. Tetramer of two alpha and two beta chains.

The enzyme catalyses (1S,2R)-1-C-(indol-3-yl)glycerol 3-phosphate + L-serine = D-glyceraldehyde 3-phosphate + L-tryptophan + H2O. It participates in amino-acid biosynthesis; L-tryptophan biosynthesis; L-tryptophan from chorismate: step 5/5. Functionally, the alpha subunit is responsible for the aldol cleavage of indoleglycerol phosphate to indole and glyceraldehyde 3-phosphate. The sequence is that of Tryptophan synthase alpha chain from Francisella tularensis subsp. tularensis (strain FSC 198).